Consider the following 184-residue polypeptide: Cysteine proteinase inhibitor 3 (184 aa).

The first 35 residues, 1 to 35 (MLRRRGFCCCSGAPAAAAAALLLLAVAAAAPRAAG), serve as a signal peptide directing secretion. The Cystatin domain occupies 48–134 (GMLAAIRREQ…KAVVEFRHVG (87 aa)). The Secondary area of contact signature appears at 90–94 (QVVTG). Residues 138–165 (SQSATAADDNAGQDTADPTVASRNDLHN) form a disordered region.

Belongs to the cystatin family. Phytocystatin subfamily.

It localises to the secreted. In terms of biological role, specific inhibitor of cysteine proteinases. Probably involved in the regulation of endogenous processes and in defense against pests and pathogens. In Oryza sativa subsp. japonica (Rice), this protein is Cysteine proteinase inhibitor 3.